A 160-amino-acid polypeptide reads, in one-letter code: MAGVLRSAFPRPPCRLQTVKKGAESLIGTEWIRHKFTKSRIPDKVFQPKPEDHEKYGGDPQNPHKLHIVTRIRSTKRRPYWEKDTIKMLGLQKAHSPQIHKNIPSVNAKLKVVKHLIRIQPLKLPQGLPTEETMSSTCLKSTGELVVQWHLKPVEQEAKS.

The N-terminal 34 residues, 1–34, are a transit peptide targeting the mitochondrion; the sequence is MAGVLRSAFPRPPCRLQTVKKGAESLIGTEWIRH. Residues 44 to 64 form a disordered region; it reads KVFQPKPEDHEKYGGDPQNPH.

It belongs to the universal ribosomal protein uL30 family. As to quaternary structure, component of the mitochondrial ribosome large subunit (39S) which comprises a 16S rRNA and about 50 distinct proteins.

It localises to the mitochondrion. This chain is Large ribosomal subunit protein uL30m (Mrpl30), found in Mus musculus (Mouse).